A 300-amino-acid chain; its full sequence is Protein SPEAR2 (300 aa).

Residues 1 to 11 show a composition bias toward polar residues; sequence MCSNNNTSSGS. Residues 1 to 64 are disordered; the sequence is MCSNNNTSSG…PPLSSSPSLP (64 aa). Residues 25-38 are compositionally biased toward basic residues; that stretch reads CRKKQKKDKVRRRG. The SPL motif lies at 37-45; that stretch reads RGPGVAELE. The span at 43–54 shows a compositional bias: basic and acidic residues; the sequence is ELEKIRLQEEYK. A compositionally biased stretch (low complexity) spans 55–64; it reads PPLSSSPSLP. Residues 294 to 300 carry the EAR motif; that stretch reads IDLNLKL.

In terms of assembly, homodimer and heterodimer with SPL and SPEARs. Interacts with SPL, SPEAR1, SPEAR3 and SPEAR4. As to expression, expressed in leaves.

In terms of biological role, adapter-like transcriptional repressor recruiting TPL/TPR corepressors to inhibit TCP transcription factors. May be involved in leaf development. This Arabidopsis thaliana (Mouse-ear cress) protein is Protein SPEAR2.